A 298-amino-acid polypeptide reads, in one-letter code: Ectoine dioxygenase (298 aa).

Positions 1 to 18 (MLQQAIDRDPVDRIDRYP) are enriched in basic and acidic residues. Positions 1 to 26 (MLQQAIDRDPVDRIDRYPTRTAEPAP) are disordered. L-ectoine is bound at residue glutamine 133. Fe cation contacts are provided by histidine 150, aspartate 152, and histidine 251.

Belongs to the PhyH family. EctD subfamily. Homodimer. Fe(2+) is required as a cofactor.

The enzyme catalyses L-ectoine + 2-oxoglutarate + O2 = 5-hydroxyectoine + succinate + CO2. Functionally, involved in the biosynthesis of 5-hydroxyectoine, called compatible solute, which helps organisms to survive extreme osmotic stress by acting as a highly soluble organic osmolyte. Catalyzes the 2-oxoglutarate-dependent selective hydroxylation of L-ectoine to yield (4S,5S)-5-hydroxyectoine. The chain is Ectoine dioxygenase from Nocardia farcinica (strain IFM 10152).